The sequence spans 1085 residues: SLIT-ROBO Rho GTPase-activating protein 1 (1085 aa).

Residues 19–314 (SQVKEIRAQL…AVDNLEPRSD (296 aa)) form the F-BAR domain. Residues 351–390 (VQAELMLRYQQLQSRLATLKIENEEVKKTTEATLQTIQDM) are a coiled coil. Ser-416 carries the phosphoserine modification. Positions 475–496 (YMTTRPPNVPPKPQKHRKSRPR) are disordered. In terms of domain architecture, Rho-GAP spans 506–694 (GDLETFVKDS…TIIIHHETIF (189 aa)). The SH3 domain occupies 743 to 802 (CEPIEAIAKFDYVGRSARELSFKKGASLLLYHRASEDWWEGRHNGIDGLVPHQYIVVQDM). A compositionally biased stretch (polar residues) spans 808–822 (DTLSQKADSEASSGP). The disordered stretch occupies residues 808–954 (DTLSQKADSE…TGFNDHKPLD (147 aa)). Ser-835 and Ser-917 each carry phosphoserine. Basic and acidic residues predominate over residues 922 to 931 (SRHDSLKKID). Phosphoserine is present on Ser-932. The span at 937-946 (RSTSSGQYTG) shows a compositional bias: polar residues. Residues 956 to 985 (ETIAQDIEETMNTALNELRELERQSTAKHA) are a coiled coil. Over residues 997-1011 (KNSPTPATSTESLSP) the composition is skewed to polar residues. Disordered stretches follow at residues 997–1038 (KNSP…MSTF) and 1051–1085 (KPPA…SCTM). Ser-999 is subject to Phosphoserine. Residue Thr-1001 is modified to Phosphothreonine. Low complexity predominate over residues 1027 to 1037 (STSSSSDTMST). The residue at position 1032 (Ser-1032) is a Phosphoserine.

Homodimer. Forms a heterooligomer with SRGAP2 and SRGAP3 through its F-BAR domain. Interacts with ROBO1, CDC42 and RHOA. Interacts with FASLG. In terms of tissue distribution, expressed in brain, lung, kidney, and testis.

Functionally, GTPase-activating protein for RhoA and Cdc42 small GTPases. Together with CDC42 seems to be involved in the pathway mediating the repulsive signaling of Robo and Slit proteins in neuronal migration. SLIT2, probably through interaction with ROBO1, increases the interaction of SRGAP1 with ROBO1 and inactivates CDC42. The protein is SLIT-ROBO Rho GTPase-activating protein 1 (SRGAP1) of Homo sapiens (Human).